Reading from the N-terminus, the 131-residue chain is Sulfurtransferase TusD (131 aa).

Catalysis depends on C81, which acts as the Cysteine persulfide intermediate.

The protein belongs to the DsrE/TusD family. Heterohexamer, formed by a dimer of trimers. The hexameric TusBCD complex contains 2 copies each of TusB, TusC and TusD. The TusBCD complex interacts with TusE.

The protein localises to the cytoplasm. Functionally, part of a sulfur-relay system required for 2-thiolation of 5-methylaminomethyl-2-thiouridine (mnm(5)s(2)U) at tRNA wobble positions. Accepts sulfur from TusA and transfers it in turn to TusE. The sequence is that of Sulfurtransferase TusD from Yersinia pseudotuberculosis serotype O:1b (strain IP 31758).